Here is a 309-residue protein sequence, read N- to C-terminus: 11-beta-hydroxysteroid dehydrogenase-like 3 (309 aa).

A helical; Signal-anchor for type II membrane protein membrane pass occupies residues 10–30 (LLLPPLTIIFLFLFYPFYLLI). NADP(+) contacts are provided by residues 54–80 (GASS…VARR) and D105. Position 184 (S184) interacts with substrate. The Proton acceptor role is filled by Y197. NADP(+) is bound by residues 197-201 (YAASK) and K201.

The protein belongs to the short-chain dehydrogenases/reductases (SDR) family.

The protein resides in the membrane. The sequence is that of 11-beta-hydroxysteroid dehydrogenase-like 3 (HSD3) from Arabidopsis thaliana (Mouse-ear cress).